The sequence spans 877 residues: Protein SEY1 homolog (877 aa).

The Cytoplasmic portion of the chain corresponds to 1-735 (MVAFAGGART…LRSIEGEKQN (735 aa)). In terms of domain architecture, GB1/RHD3-type G spans 49 to 307 (GITYHVVGVL…VPLDGIPSYL (259 aa)). 59–66 (GGQSSGKS) contacts GTP. Residues 388-410 (RIDIVRKTEAELEEELLKVELKL) adopt a coiled-coil conformation. A helical transmembrane segment spans residues 736-756 (LPAWVLPVLLLLGWNEIWYVL). Residues 757–759 (SSP) are Lumenal-facing. Residues 760 to 780 (VLLVVVVIIAAVFLRGFLLTQ) form a helical membrane-spanning segment. The Cytoplasmic segment spans residues 781-877 (WAIFEETGPT…KEEEVPTQKE (97 aa)). The interval 850-877 (PTVLPPSTTSATLTRRLKKEEEVPTQKE) is disordered. Basic and acidic residues predominate over residues 867 to 877 (KKEEEVPTQKE).

Belongs to the TRAFAC class dynamin-like GTPase superfamily. GB1/RHD3 GTPase family. RHD3 subfamily.

Its subcellular location is the endoplasmic reticulum membrane. In terms of biological role, probable GTP-binding protein that may be involved in cell development. This chain is Protein SEY1 homolog, found in Trypanosoma cruzi (strain CL Brener).